The following is a 149-amino-acid chain: Pleckstrin homology domain-containing family J member 1 (149 aa).

Positions 15 to 108 (PAEKAAEILM…WIEALKRASY (94 aa)) constitute a PH domain.

In Gallus gallus (Chicken), this protein is Pleckstrin homology domain-containing family J member 1 (PLEKHJ1).